Here is a 540-residue protein sequence, read N- to C-terminus: Chaperonin GroEL 2 (540 aa).

Residues 30-33 (TLGP), K51, 87-91 (DGTTT), G415, 480-482 (NAL), and D496 contribute to the ATP site.

This sequence belongs to the chaperonin (HSP60) family. Forms a cylinder of 14 subunits composed of two heptameric rings stacked back-to-back. Interacts with the co-chaperonin GroES.

It localises to the cytoplasm. It catalyses the reaction ATP + H2O + a folded polypeptide = ADP + phosphate + an unfolded polypeptide.. Its function is as follows. Together with its co-chaperonin GroES, plays an essential role in assisting protein folding. The GroEL-GroES system forms a nano-cage that allows encapsulation of the non-native substrate proteins and provides a physical environment optimized to promote and accelerate protein folding. This is Chaperonin GroEL 2 from Protochlamydia amoebophila (strain UWE25).